The chain runs to 526 residues: Plant intracellular Ras-group-related LRR protein 5 (526 aa).

LRR repeat units follow at residues 229-252, 253-275, 276-297, 298-321, 323-344, 346-367, 368-390, 391-414, 416-437, 438-463, and 465-484; these read LSSLVRLDLSENCIMVLPATIGGL, ISLTRLDLHSNRIGQLPESIGDL, LNLVNLNLSGNQLSSLPSSFNR, LIHLEELDLSSNSLSILPESIGSL, SLKKLDVETNNIEEIPHSISGC, SMEELRADYNRLKALPEAVGKL, STLEILTVRYNNIRQLPTTMSSM, ANLKELDVSFNELESVPESLCYAK, LVKLNIGNNFANLRSLPGLIGN, LEKLEELDMSNNQIRFLPYSFKTLSN, and RVLQTEQNPLEELPRDITEK. The GVYW; degenerate motif lies at 485–492; sequence GAQAVVQY.

Belongs to the SHOC2 family. In terms of tissue distribution, widely expressed but preferentially in roots.

Its function is as follows. Leucine-rich repeat protein that likely mediates protein interactions, possibly in the context of signal transduction. This is Plant intracellular Ras-group-related LRR protein 5 (PIRL5) from Arabidopsis thaliana (Mouse-ear cress).